We begin with the raw amino-acid sequence, 131 residues long: uncharacterized protein (131 aa).

This is an uncharacterized protein from Bacillus subtilis (strain 168).